A 311-amino-acid polypeptide reads, in one-letter code: MEKASLNIAQTKEIPLTDRRMGLRGWKACSRPHLLGRILLFMSILFITSAELSSDVSSREVYMPIFNNKLSFKVPPIKRSLLLGAALYEDFEYSSNNSASDGAFCTVFNAGMNDASREVVFEIHVMDVLQEETDSSRFGGTSHERGRQSLGFSVFNNKNGDLLRSKKNLASGTSVIEVNPGNCNEFLICFINLVYDGSWSSIDTEKSVTIKMTYNDKLDPDMLLHLVNQMTPQVVKALNTVSDGLFQIVSDTTLLQMESDRRDINEATYSYLIVGFVSLMVAQLISNIIVTTYLIIKIKSNPSSHIKKKGL.

Helical transmembrane passes span Pro-32–Leu-52 and Tyr-271–Thr-291.

It localises to the membrane. May be involved in the modulation of rDNA transcription. This chain is Regulator of rDNA transcription protein 6 (RRT6), found in Saccharomyces cerevisiae (strain ATCC 204508 / S288c) (Baker's yeast).